We begin with the raw amino-acid sequence, 648 residues long: Nucleoside triphosphatase I (648 aa).

The region spanning Phe48–Asn212 is the Helicase ATP-binding domain. Trp61 to Thr68 lines the ATP pocket. The DEXH box signature appears at Asp150 to His153. The region spanning Tyr378–Lys541 is the Helicase C-terminal domain. A binding to the cap-specific mRNA (nucleoside-2'-O-)-methyltransferase region spans residues Asp467–Ile533.

It belongs to the helicase family. NPH I subfamily. Monomer. Interacts (via C-terminus) with RAP94 (via N-terminus). Interacts with the cap-specific mRNA (nucleoside-2'-O-)-methyltransferase.

The protein localises to the virion. It catalyses the reaction a ribonucleoside 5'-triphosphate + H2O = a ribonucleoside 5'-diphosphate + phosphate + H(+). DNA-dependent ATPase required for providing the needed energy to achieve the termination of early transcripts. Acts in concert with the RAP94 subunit of the virion RNA polymerase and the capping enzyme/VTF to catalyze release of UUUUUNU-containing nascent RNA from the elongation complex. NPH-I must bind ssDNA in order to exhibit ATPase activity. This chain is Nucleoside triphosphatase I (NPH1), found in Amsacta (AmEPV).